We begin with the raw amino-acid sequence, 89 residues long: Small ribosomal subunit protein uS15 (89 aa).

Positions Met1–Asp21 are enriched in basic and acidic residues. The tract at residues Met1–Gly23 is disordered.

It belongs to the universal ribosomal protein uS15 family. In terms of assembly, part of the 30S ribosomal subunit. Forms a bridge to the 50S subunit in the 70S ribosome, contacting the 23S rRNA.

In terms of biological role, one of the primary rRNA binding proteins, it binds directly to 16S rRNA where it helps nucleate assembly of the platform of the 30S subunit by binding and bridging several RNA helices of the 16S rRNA. Forms an intersubunit bridge (bridge B4) with the 23S rRNA of the 50S subunit in the ribosome. This Desulforamulus reducens (strain ATCC BAA-1160 / DSM 100696 / MI-1) (Desulfotomaculum reducens) protein is Small ribosomal subunit protein uS15.